The sequence spans 86 residues: U15-lycotoxin-Ls1d (86 aa).

The N-terminal stretch at 1–20 (MNSKIFAVLLLLAFLSCVLS) is a signal peptide. The WAP domain maps to 21–66 (DQYCPKSSITACKKMNIRNDCCKDDDCTGGSWCCATPCGNFCKYPT). 5 disulfide bridges follow: cysteine 24–cysteine 54, cysteine 32–cysteine 58, cysteine 41–cysteine 53, cysteine 42–cysteine 80, and cysteine 47–cysteine 62.

It belongs to the venom protein 11 family. 01 (wap-1) subfamily. Contains 5 disulfide bonds. Expressed by the venom gland.

The protein localises to the secreted. Functionally, has antibacterial activity. The sequence is that of U15-lycotoxin-Ls1d from Lycosa singoriensis (Wolf spider).